Reading from the N-terminus, the 118-residue chain is Large ribosomal subunit protein uL24 (118 aa).

Belongs to the universal ribosomal protein uL24 family. Part of the 50S ribosomal subunit.

One of two assembly initiator proteins, it binds directly to the 5'-end of the 23S rRNA, where it nucleates assembly of the 50S subunit. Its function is as follows. One of the proteins that surrounds the polypeptide exit tunnel on the outside of the subunit. The chain is Large ribosomal subunit protein uL24 from Synechococcus sp. (strain CC9902).